We begin with the raw amino-acid sequence, 868 residues long: Muscle, skeletal receptor tyrosine-protein kinase (868 aa).

The first 21 residues, 1 to 21, serve as a signal peptide directing secretion; that stretch reads MRELVNIPLLQMLTLVAFSGT. Over 22 to 494 the chain is Extracellular; the sequence is EKLPKAPVIT…FAVSPAYSMT (473 aa). 3 Ig-like domains span residues 28–116, 121–205, and 212–302; these read PVIT…GALQ, PKIT…KLVK, and ARIL…ATVS. 3 disulfides stabilise this stretch: Cys-49/Cys-99, Cys-98/Cys-112, and Cys-142/Cys-190. N-linked (GlcNAc...) asparagine glycosylation is present at Asn-222. Cystine bridges form between Cys-233–Cys-282, Cys-317–Cys-382, Cys-325–Cys-375, Cys-366–Cys-406, Cys-394–Cys-447, and Cys-398–Cys-434. Residues 312–450 form the FZ domain; that stretch reads DSQGYCAQYR…HRDPTACTRL (139 aa). The N-linked (GlcNAc...) asparagine glycan is linked to Asn-338. N-linked (GlcNAc...) asparagine glycosylation is present at Asn-459. The chain crosses the membrane as a helical span at residues 495 to 515; sequence VIISIVSSFALFALLTIATLY. Over 516 to 868 the chain is Cytoplasmic; the sequence is CCRRRKEWKN…CERAEGTVGV (353 aa). Tyr-553 bears the Phosphotyrosine; by autocatalysis mark. The 282-residue stretch at 574–855 folds into the Protein kinase domain; the sequence is IEYVRDIGEG…PSFCSIHRIL (282 aa). Residues 580 to 588 and Lys-608 contribute to the ATP site; that span reads IGEGAFGRV. A phosphoserine; by CK2 mark is found at Ser-680 and Ser-697. Residue Asp-724 is the Proton acceptor of the active site. Tyr-754 is modified (phosphotyrosine; by autocatalysis).

The protein belongs to the protein kinase superfamily. Tyr protein kinase family. In terms of assembly, monomer. Homodimer. Interacts with LRP4; the heterodimer forms an AGRIN receptor complex that binds AGRIN resulting in activation of MUSK. Forms a heterotetramer composed of 2 DOK7 and 2 MUSK molecules which facilitates MUSK trans-autophosphorylation on tyrosine residue and activation. Interacts (via cytoplasmic part) with DOK7 (via IRS-type PTB domain); requires MUSK phosphorylation. Interacts with DVL1 (via DEP domain); the interaction is direct and mediates the formation of a DVL1, MUSK and PAK1 ternary complex involved in AChR clustering. Interacts with PDZRN3; this interaction is enhanced by agrin. Interacts with FNTA; the interaction is direct and mediates AGRIN-induced phosphorylation and activation of FNTA. Interacts with CSNK2B; mediates regulation by CK2. Interacts (via the cytoplasmic domain) with DNAJA3. Interacts with NSF; may regulate MUSK endocytosis and activity. Interacts with CAV3; may regulate MUSK signaling. Interacts with RNF31. Mg(2+) is required as a cofactor. Ubiquitinated by PDZRN3. Ubiquitination promotes endocytosis and lysosomal degradation. Post-translationally, phosphorylated. Phosphorylation is induced by AGRIN. Autophosphorylated. Autophosphorylation at Tyr-553 is required for interaction with DOK7 which in turn stimulates the phosphorylation and the activation of MUSK. In terms of processing, neddylated. As to expression, expressed preferentially in skeletal muscle.

The protein resides in the postsynaptic cell membrane. The enzyme catalyses L-tyrosyl-[protein] + ATP = O-phospho-L-tyrosyl-[protein] + ADP + H(+). With respect to regulation, positively regulated by CK2. Functionally, receptor tyrosine kinase which plays a central role in the formation and the maintenance of the neuromuscular junction (NMJ), the synapse between the motor neuron and the skeletal muscle. Recruitment of AGRIN by LRP4 to the MUSK signaling complex induces phosphorylation and activation of MUSK, the kinase of the complex. The activation of MUSK in myotubes regulates the formation of NMJs through the regulation of different processes including the specific expression of genes in subsynaptic nuclei, the reorganization of the actin cytoskeleton and the clustering of the acetylcholine receptors (AChR) in the postsynaptic membrane. May regulate AChR phosphorylation and clustering through activation of ABL1 and Src family kinases which in turn regulate MUSK. DVL1 and PAK1 that form a ternary complex with MUSK are also important for MUSK-dependent regulation of AChR clustering. May positively regulate Rho family GTPases through FNTA. Mediates the phosphorylation of FNTA which promotes prenylation, recruitment to membranes and activation of RAC1 a regulator of the actin cytoskeleton and of gene expression. Other effectors of the MUSK signaling include DNAJA3 which functions downstream of MUSK. May also play a role within the central nervous system by mediating cholinergic responses, synaptic plasticity and memory formation. The chain is Muscle, skeletal receptor tyrosine-protein kinase (Musk) from Mus musculus (Mouse).